A 296-amino-acid polypeptide reads, in one-letter code: Diaminopimelate epimerase (296 aa).

Residues Asn17, Gln49, and Asn69 each contribute to the substrate site. Residue Cys78 is the Proton donor of the active site. Substrate-binding positions include Gly79 to Asn80, Asn171, Asn205, and Glu223 to Arg224. Cys232 functions as the Proton acceptor in the catalytic mechanism. Residue Gly233–Thr234 participates in substrate binding.

It belongs to the diaminopimelate epimerase family. Homodimer.

The protein localises to the cytoplasm. The enzyme catalyses (2S,6S)-2,6-diaminopimelate = meso-2,6-diaminopimelate. It participates in amino-acid biosynthesis; L-lysine biosynthesis via DAP pathway; DL-2,6-diaminopimelate from LL-2,6-diaminopimelate: step 1/1. Catalyzes the stereoinversion of LL-2,6-diaminopimelate (L,L-DAP) to meso-diaminopimelate (meso-DAP), a precursor of L-lysine and an essential component of the bacterial peptidoglycan. The protein is Diaminopimelate epimerase of Methylorubrum populi (strain ATCC BAA-705 / NCIMB 13946 / BJ001) (Methylobacterium populi).